Reading from the N-terminus, the 128-residue chain is Large-conductance mechanosensitive channel (128 aa).

The next 2 helical transmembrane spans lie at 11-31 (FALK…AAFG) and 70-90 (GAFI…FIFV).

The protein belongs to the MscL family. In terms of assembly, homopentamer.

It is found in the cell membrane. Functionally, channel that opens in response to stretch forces in the membrane lipid bilayer. May participate in the regulation of osmotic pressure changes within the cell. The protein is Large-conductance mechanosensitive channel of Listeria monocytogenes serotype 4b (strain CLIP80459).